The sequence spans 124 residues: MRHYEVLFILKPTLTEEEVSAKLEFVKEVLTKNGAEIESVVPMGTRKLAYKIKKYERGTYFVIYFKAPTNLIAELERVLRITEEVIRFLIVKYENKKEIAAWEKLSKGIKQNKKEIKASESTEG.

The protein belongs to the bacterial ribosomal protein bS6 family.

Functionally, binds together with bS18 to 16S ribosomal RNA. This Campylobacter lari (strain RM2100 / D67 / ATCC BAA-1060) protein is Small ribosomal subunit protein bS6.